The chain runs to 1070 residues: DNA-directed RNA polymerase subunit beta (1070 aa).

The protein belongs to the RNA polymerase beta chain family. As to quaternary structure, in plastids the minimal PEP RNA polymerase catalytic core is composed of four subunits: alpha, beta, beta', and beta''. When a (nuclear-encoded) sigma factor is associated with the core the holoenzyme is formed, which can initiate transcription.

It is found in the plastid. The protein localises to the chloroplast. It catalyses the reaction RNA(n) + a ribonucleoside 5'-triphosphate = RNA(n+1) + diphosphate. Its function is as follows. DNA-dependent RNA polymerase catalyzes the transcription of DNA into RNA using the four ribonucleoside triphosphates as substrates. This Chloranthus spicatus (Chulantree) protein is DNA-directed RNA polymerase subunit beta.